Reading from the N-terminus, the 192-residue chain is EF-hand protein 5 (192 aa).

A disordered region spans residues 1-36; sequence MKDKAPVSSQQDHFSRGGAVGGKPISDVRGTSRPFY. 4 EF-hand domains span residues 46–80, 81–118, 119–154, and 155–190; these read AELAEGFRVLSNGQKTISIPMKEVSALMASVGLHL, SDEEFHEVMRVFGQGEQTNTEELSFKDFLSLMMCEVDD, TMLEEMRGAFLHYDKQKTGFVTKKQFTELFATGGEC, and STPEEVEELLTIAEQDETDDKIDYNRFINELIHRLN. Residues Thr100, Glu102, Asp107, Asp132, and Thr136 each contribute to the Ca(2+) site.

This chain is EF-hand protein 5, found in Trypanosoma brucei brucei.